The following is a 145-amino-acid chain: UPF0260 protein VV2402 (145 aa).

It belongs to the UPF0260 family.

This Vibrio vulnificus (strain YJ016) protein is UPF0260 protein VV2402.